A 936-amino-acid polypeptide reads, in one-letter code: Phosphoenolpyruvate carboxylase (936 aa).

Positions 1-20 (MSSLNLSAGPEPVSERPDDA) are disordered. Active-site residues include histidine 164 and lysine 598.

Belongs to the PEPCase type 1 family. Requires Mg(2+) as cofactor.

The enzyme catalyses oxaloacetate + phosphate = phosphoenolpyruvate + hydrogencarbonate. Forms oxaloacetate, a four-carbon dicarboxylic acid source for the tricarboxylic acid cycle. The sequence is that of Phosphoenolpyruvate carboxylase (ppc) from Rhodopseudomonas palustris (strain ATCC BAA-98 / CGA009).